Here is a 337-residue protein sequence, read N- to C-terminus: Protein OPG055 (337 aa).

This sequence belongs to the orthopoxvirus OPG055 family.

Stimulates increases in peripheral microtubule dynamics and may increase the motility of the infected cells, contributing to cell-to-cell spread of the virus. Seems to inhibit the signaling via the GTPase RHOA and DIAPH1/mDia. This chain is Protein OPG055 (OPG055), found in Homo sapiens (Human).